Reading from the N-terminus, the 931-residue chain is Phosphoenolpyruvate carboxylase (931 aa).

Active-site residues include His158 and Lys593.

Belongs to the PEPCase type 1 family. Mg(2+) serves as cofactor.

It carries out the reaction oxaloacetate + phosphate = phosphoenolpyruvate + hydrogencarbonate. Its function is as follows. Forms oxaloacetate, a four-carbon dicarboxylic acid source for the tricarboxylic acid cycle. This is Phosphoenolpyruvate carboxylase from Azorhizobium caulinodans (strain ATCC 43989 / DSM 5975 / JCM 20966 / LMG 6465 / NBRC 14845 / NCIMB 13405 / ORS 571).